The chain runs to 510 residues: Light-independent protochlorophyllide reductase subunit B (510 aa).

Aspartate 36 provides a ligand contact to [4Fe-4S] cluster. The active-site Proton donor is the aspartate 296. Position 431–432 (431–432 (GM)) interacts with substrate.

This sequence belongs to the ChlB/BchB/BchZ family. As to quaternary structure, protochlorophyllide reductase is composed of three subunits; ChlL, ChlN and ChlB. Forms a heterotetramer of two ChlB and two ChlN subunits. [4Fe-4S] cluster serves as cofactor.

The protein localises to the plastid. Its subcellular location is the chloroplast. The enzyme catalyses chlorophyllide a + oxidized 2[4Fe-4S]-[ferredoxin] + 2 ADP + 2 phosphate = protochlorophyllide a + reduced 2[4Fe-4S]-[ferredoxin] + 2 ATP + 2 H2O. The protein operates within porphyrin-containing compound metabolism; chlorophyll biosynthesis (light-independent). Functionally, component of the dark-operative protochlorophyllide reductase (DPOR) that uses Mg-ATP and reduced ferredoxin to reduce ring D of protochlorophyllide (Pchlide) to form chlorophyllide a (Chlide). This reaction is light-independent. The NB-protein (ChlN-ChlB) is the catalytic component of the complex. The polypeptide is Light-independent protochlorophyllide reductase subunit B (Auxenochlorella protothecoides (Green microalga)).